Consider the following 437-residue polypeptide: ATP-dependent protease ATPase subunit HslU (437 aa).

Residues Ile18, 60-65 (GVGKTE), Asp250, Glu315, and Arg387 each bind ATP.

The protein belongs to the ClpX chaperone family. HslU subfamily. A double ring-shaped homohexamer of HslV is capped on each side by a ring-shaped HslU homohexamer. The assembly of the HslU/HslV complex is dependent on binding of ATP.

The protein resides in the cytoplasm. Its function is as follows. ATPase subunit of a proteasome-like degradation complex; this subunit has chaperone activity. The binding of ATP and its subsequent hydrolysis by HslU are essential for unfolding of protein substrates subsequently hydrolyzed by HslV. HslU recognizes the N-terminal part of its protein substrates and unfolds these before they are guided to HslV for hydrolysis. The polypeptide is ATP-dependent protease ATPase subunit HslU (Dinoroseobacter shibae (strain DSM 16493 / NCIMB 14021 / DFL 12)).